A 373-amino-acid polypeptide reads, in one-letter code: Queuine tRNA-ribosyltransferase (373 aa).

The active-site Proton acceptor is Asp90. Substrate is bound by residues 90-94 (DSGGF), Asp144, Gln193, and Gly220. An RNA binding region spans residues 251–257 (GVGTPED). Asp270 (nucleophile) is an active-site residue. Residues 275 to 279 (TRNAR) are RNA binding; important for wobble base 34 recognition. Residues Cys308, Cys310, Cys313, and His339 each contribute to the Zn(2+) site.

It belongs to the queuine tRNA-ribosyltransferase family. As to quaternary structure, homodimer. Within each dimer, one monomer is responsible for RNA recognition and catalysis, while the other monomer binds to the replacement base PreQ1. It depends on Zn(2+) as a cofactor.

The catalysed reaction is 7-aminomethyl-7-carbaguanine + guanosine(34) in tRNA = 7-aminomethyl-7-carbaguanosine(34) in tRNA + guanine. It participates in tRNA modification; tRNA-queuosine biosynthesis. In terms of biological role, catalyzes the base-exchange of a guanine (G) residue with the queuine precursor 7-aminomethyl-7-deazaguanine (PreQ1) at position 34 (anticodon wobble position) in tRNAs with GU(N) anticodons (tRNA-Asp, -Asn, -His and -Tyr). Catalysis occurs through a double-displacement mechanism. The nucleophile active site attacks the C1' of nucleotide 34 to detach the guanine base from the RNA, forming a covalent enzyme-RNA intermediate. The proton acceptor active site deprotonates the incoming PreQ1, allowing a nucleophilic attack on the C1' of the ribose to form the product. After dissociation, two additional enzymatic reactions on the tRNA convert PreQ1 to queuine (Q), resulting in the hypermodified nucleoside queuosine (7-(((4,5-cis-dihydroxy-2-cyclopenten-1-yl)amino)methyl)-7-deazaguanosine). This is Queuine tRNA-ribosyltransferase from Campylobacter jejuni (strain RM1221).